The following is a 172-amino-acid chain: MRLTSKGRYAVTAMLDVALHSQDGPVPLADISERQGISLSYLEQLFSRLRKAGLVASVRGPGGGYRLGEDANDIAVGMVIAAVDESVDATKCHGKADCQGGVRCLTHTLWHDLSSRISGFLNNITLGELMRDNNVQEISGRQDQVLSNSSLRTSFGHKKTHDSTTIGVDVRS.

The region spanning R2–R131 is the HTH rrf2-type domain. The H-T-H motif DNA-binding region spans L28 to K51. Positions 92, 98, and 104 each coordinate [2Fe-2S] cluster.

It depends on [2Fe-2S] cluster as a cofactor.

Functionally, regulates the transcription of several operons and genes involved in the biogenesis of Fe-S clusters and Fe-S-containing proteins. The polypeptide is HTH-type transcriptional regulator IscR (Photobacterium profundum (strain SS9)).